A 503-amino-acid polypeptide reads, in one-letter code: Probable cytosol aminopeptidase (503 aa).

K274 and D279 together coordinate Mn(2+). The active site involves K286. Mn(2+) contacts are provided by D297, D356, and E358. The active site involves R360.

It belongs to the peptidase M17 family. Requires Mn(2+) as cofactor.

Its subcellular location is the cytoplasm. The catalysed reaction is Release of an N-terminal amino acid, Xaa-|-Yaa-, in which Xaa is preferably Leu, but may be other amino acids including Pro although not Arg or Lys, and Yaa may be Pro. Amino acid amides and methyl esters are also readily hydrolyzed, but rates on arylamides are exceedingly low.. It catalyses the reaction Release of an N-terminal amino acid, preferentially leucine, but not glutamic or aspartic acids.. Functionally, presumably involved in the processing and regular turnover of intracellular proteins. Catalyzes the removal of unsubstituted N-terminal amino acids from various peptides. The polypeptide is Probable cytosol aminopeptidase (Burkholderia orbicola (strain AU 1054)).